Here is a 414-residue protein sequence, read N- to C-terminus: Peptide chain release factor subunit 1 (414 aa).

The protein belongs to the eukaryotic release factor 1 family. As to quaternary structure, heterodimer of two subunits, one of which binds GTP.

It is found in the cytoplasm. In terms of biological role, directs the termination of nascent peptide synthesis (translation) in response to the termination codons UAA, UAG and UGA. The sequence is that of Peptide chain release factor subunit 1 from Methanococcoides burtonii (strain DSM 6242 / NBRC 107633 / OCM 468 / ACE-M).